Consider the following 267-residue polypeptide: Dihydropteroate synthase (267 aa).

Residues methionine 1–lysine 251 enclose the Pterin-binding domain. Mg(2+) is bound at residue asparagine 11. (7,8-dihydropterin-6-yl)methyl diphosphate contacts are provided by residues threonine 51, aspartate 84, asparagine 103, aspartate 167, lysine 203, and arginine 239–histidine 241.

Belongs to the DHPS family. Homodimer. Mg(2+) is required as a cofactor.

The catalysed reaction is (7,8-dihydropterin-6-yl)methyl diphosphate + 4-aminobenzoate = 7,8-dihydropteroate + diphosphate. It functions in the pathway cofactor biosynthesis; tetrahydrofolate biosynthesis; 7,8-dihydrofolate from 2-amino-4-hydroxy-6-hydroxymethyl-7,8-dihydropteridine diphosphate and 4-aminobenzoate: step 1/2. Its function is as follows. Catalyzes the condensation of para-aminobenzoate (pABA) with 6-hydroxymethyl-7,8-dihydropterin diphosphate (DHPt-PP) to form 7,8-dihydropteroate (H2Pte), the immediate precursor of folate derivatives. This Staphylococcus aureus (strain MW2) protein is Dihydropteroate synthase (folP).